The primary structure comprises 376 residues: Cysteine synthase 1 (376 aa).

Residues 1–16 constitute a mitochondrion transit peptide; the sequence is MFRHGVRTFATTSLRR. At Lys79 the chain carries N6-(pyridoxal phosphate)lysine. Residues Asn109, 215–219, and Ser314 contribute to the pyridoxal 5'-phosphate site; that span reads GTGGT.

Belongs to the cysteine synthase/cystathionine beta-synthase family. Pyridoxal 5'-phosphate serves as cofactor.

It is found in the mitochondrion. It carries out the reaction O-succinyl-L-serine + hydrogen sulfide = L-cysteine + succinate. It catalyses the reaction O-acetyl-L-serine + hydrogen sulfide = L-cysteine + acetate. It functions in the pathway amino-acid biosynthesis; L-cysteine biosynthesis; L-cysteine from L-serine: step 2/2. Its function is as follows. Catalyzes the conversion of O-succinyl-L-serine into cysteine, the last step in the cysteine biosynthesis pathway. Can also use O-acetyl-L-serine. The polypeptide is Cysteine synthase 1 (cys-17) (Neurospora crassa (strain ATCC 24698 / 74-OR23-1A / CBS 708.71 / DSM 1257 / FGSC 987)).